The chain runs to 186 residues: Adenylate kinase (186 aa).

10-15 (GVGKGT) contacts ATP. Residues 30–59 (STGDIFRYNIKNKTELGLEAMSYTDKGELV) form an NMP region. AMP-binding positions include Thr-31, Arg-36, 57-59 (ELV), 85-88 (GYPR), and Gln-92. The interval 126–136 (KRAAEQGRADD) is LID. ATP is bound at residue Arg-127. 2 residues coordinate AMP: Arg-133 and Arg-144. Residue Gly-172 participates in ATP binding.

Belongs to the adenylate kinase family. As to quaternary structure, monomer.

Its subcellular location is the cytoplasm. It carries out the reaction AMP + ATP = 2 ADP. It participates in purine metabolism; AMP biosynthesis via salvage pathway; AMP from ADP: step 1/1. In terms of biological role, catalyzes the reversible transfer of the terminal phosphate group between ATP and AMP. Plays an important role in cellular energy homeostasis and in adenine nucleotide metabolism. In Bifidobacterium longum (strain NCC 2705), this protein is Adenylate kinase.